Here is a 207-residue protein sequence, read N- to C-terminus: MVHYKLTYFNARGLAEISRQLFHMAGVEFEDERINEEKFSQLKPTFPSGQVPILCIDGAQFSQSTAIARYLARKFGFVGQTAEEELQADEVVDTFKDFIESFRKFVIAVLSGESEEILKNIREEVIKPAVKTYTAYLKAILEKSSSGYLVGNELTWADLVIADNLTTLINAELLDIENDKLLKEFREKIIETPKLKEWLAKRPETRF.

The GST N-terminal domain maps to 2–79 (VHYKLTYFNA…YLARKFGFVG (78 aa)). Glutathione-binding positions include Tyr-8, Lys-43, 49-51 (GQV), and 63-64 (QS). Positions 81-207 (TAEEELQADE…WLAKRPETRF (127 aa)) constitute a GST C-terminal domain.

The protein belongs to the GST superfamily. Sigma family.

It catalyses the reaction RX + glutathione = an S-substituted glutathione + a halide anion + H(+). Functionally, conjugation of reduced glutathione to a wide number of exogenous and endogenous hydrophobic electrophiles. The sequence is that of Glutathione S-transferase 3 (gst-3) from Caenorhabditis elegans.